The following is a 421-amino-acid chain: D-amino acid dehydrogenase (421 aa).

Residue 4-18 participates in FAD binding; that stretch reads VLVLGSGVVGLTSAW.

Belongs to the DadA oxidoreductase family. The cofactor is FAD.

It catalyses the reaction a D-alpha-amino acid + A + H2O = a 2-oxocarboxylate + AH2 + NH4(+). It participates in amino-acid degradation; D-alanine degradation; NH(3) and pyruvate from D-alanine: step 1/1. In terms of biological role, oxidative deamination of D-amino acids. The sequence is that of D-amino acid dehydrogenase from Vibrio cholerae serotype O1 (strain ATCC 39541 / Classical Ogawa 395 / O395).